Reading from the N-terminus, the 82-residue chain is U-scoloptoxin(21)-Sm3a (82 aa).

Positions 1-21 (MKIIALLLMVFLDFIIVNXAE) are cleaved as a signal peptide.

The protein belongs to the scoloptoxin-21 family. In terms of tissue distribution, expressed by the venom gland.

The protein localises to the secreted. This chain is U-scoloptoxin(21)-Sm3a, found in Scolopendra morsitans (Tanzanian blue ringleg centipede).